The following is a 345-amino-acid chain: tRNA N6-adenosine threonylcarbamoyltransferase (345 aa).

2 residues coordinate Fe cation: histidine 111 and histidine 115. Substrate is bound by residues leucine 134–glycine 138, aspartate 167, glycine 180, aspartate 184, and asparagine 278. A Fe cation-binding site is contributed by aspartate 306.

Belongs to the KAE1 / TsaD family. Fe(2+) serves as cofactor.

Its subcellular location is the cytoplasm. It carries out the reaction L-threonylcarbamoyladenylate + adenosine(37) in tRNA = N(6)-L-threonylcarbamoyladenosine(37) in tRNA + AMP + H(+). Functionally, required for the formation of a threonylcarbamoyl group on adenosine at position 37 (t(6)A37) in tRNAs that read codons beginning with adenine. Is involved in the transfer of the threonylcarbamoyl moiety of threonylcarbamoyl-AMP (TC-AMP) to the N6 group of A37, together with TsaE and TsaB. TsaD likely plays a direct catalytic role in this reaction. The sequence is that of tRNA N6-adenosine threonylcarbamoyltransferase from Cyanothece sp. (strain PCC 7425 / ATCC 29141).